The following is a 357-amino-acid chain: sn-glycerol-3-phosphate import ATP-binding protein UgpC (357 aa).

Residues 4–235 enclose the ABC transporter domain; it reads LKLQAVTKSY…PASLFVASFI (232 aa). 37–44 contributes to the ATP binding site; it reads GPSGCGKS.

It belongs to the ABC transporter superfamily. sn-glycerol-3-phosphate importer (TC 3.A.1.1.3) family. In terms of assembly, the complex is composed of two ATP-binding proteins (UgpC), two transmembrane proteins (UgpA and UgpE) and a solute-binding protein (UgpB).

Its subcellular location is the cell inner membrane. It catalyses the reaction sn-glycerol 3-phosphate(out) + ATP + H2O = sn-glycerol 3-phosphate(in) + ADP + phosphate + H(+). In terms of biological role, part of the ABC transporter complex UgpBAEC involved in sn-glycerol-3-phosphate (G3P) import. Responsible for energy coupling to the transport system. The sequence is that of sn-glycerol-3-phosphate import ATP-binding protein UgpC from Yersinia pseudotuberculosis serotype I (strain IP32953).